The sequence spans 328 residues: MLNEFPIFDYEDIQLIPNKCVIKSRAEADTSVTLGNHTFKLPVVPANMQTILDENVAEQLAKGGYFYIMHRFDEAGRIPFIKRMHDQGLIASISVGVKDYEYDFVRQLKADAPEYITIDIAHGHADSVISMIQHIKKELPDTFVIAGNVGTPEAVRELENAGADATKVGIGPGKVCITKVKTGFGTGGWQLAALRWCAKAARKPIIADGGIRTHGDIAKSIRFGASMIMIGSLFAGHIESPGKTIEVDGEQFKEYYGSASQYQKGAYKNVEGKRILLPAKGHLQDTLTEMEQDLQSAISYAGGRQVADLKHVDYVIVKNSIWNGDASH.

The Thioimidate intermediate role is filled by Cys-176. 205-228 (IIADGGIRTHGDIAKSIRFGASMI) contacts NADP(+).

Belongs to the IMPDH/GMPR family. GuaC type 2 subfamily.

The catalysed reaction is IMP + NH4(+) + NADP(+) = GMP + NADPH + 2 H(+). Catalyzes the irreversible NADPH-dependent deamination of GMP to IMP. It functions in the conversion of nucleobase, nucleoside and nucleotide derivatives of G to A nucleotides, and in maintaining the intracellular balance of A and G nucleotides. The sequence is that of GMP reductase from Streptococcus pneumoniae (strain P1031).